The primary structure comprises 445 residues: UPF0210 protein Sez_0396 (445 aa).

This sequence belongs to the UPF0210 family. As to quaternary structure, homodimer.

The chain is UPF0210 protein Sez_0396 from Streptococcus equi subsp. zooepidemicus (strain MGCS10565).